We begin with the raw amino-acid sequence, 417 residues long: Serine hydroxymethyltransferase (417 aa).

(6S)-5,6,7,8-tetrahydrofolate contacts are provided by residues Leu112 and 116–118; that span reads GHL. At Lys221 the chain carries N6-(pyridoxal phosphate)lysine. Glu247 is a binding site for (6S)-5,6,7,8-tetrahydrofolate.

This sequence belongs to the SHMT family. As to quaternary structure, homodimer. The cofactor is pyridoxal 5'-phosphate.

Its subcellular location is the cytoplasm. It catalyses the reaction (6R)-5,10-methylene-5,6,7,8-tetrahydrofolate + glycine + H2O = (6S)-5,6,7,8-tetrahydrofolate + L-serine. It functions in the pathway one-carbon metabolism; tetrahydrofolate interconversion. It participates in amino-acid biosynthesis; glycine biosynthesis; glycine from L-serine: step 1/1. Catalyzes the reversible interconversion of serine and glycine with tetrahydrofolate (THF) serving as the one-carbon carrier. This reaction serves as the major source of one-carbon groups required for the biosynthesis of purines, thymidylate, methionine, and other important biomolecules. Also exhibits THF-independent aldolase activity toward beta-hydroxyamino acids, producing glycine and aldehydes, via a retro-aldol mechanism. The polypeptide is Serine hydroxymethyltransferase (Borrelia hermsii (strain HS1 / DAH)).